The chain runs to 506 residues: Maturase K (506 aa).

Belongs to the intron maturase 2 family. MatK subfamily.

It localises to the plastid. The protein resides in the chloroplast. Usually encoded in the trnK tRNA gene intron. Probably assists in splicing its own and other chloroplast group II introns. In Artanema fimbriatum, this protein is Maturase K.